The chain runs to 98 residues: Citrate lyase acyl carrier protein (98 aa).

Residue serine 14 is modified to O-(phosphoribosyl dephospho-coenzyme A)serine.

This sequence belongs to the CitD family. Oligomer with a subunit composition of (alpha,beta,gamma)6.

The protein localises to the cytoplasm. In terms of biological role, covalent carrier of the coenzyme of citrate lyase. In Citrobacter koseri (strain ATCC BAA-895 / CDC 4225-83 / SGSC4696), this protein is Citrate lyase acyl carrier protein.